We begin with the raw amino-acid sequence, 407 residues long: Peptidase T (407 aa).

Residue H78 coordinates Zn(2+). D80 is a catalytic residue. D139 contacts Zn(2+). The Proton acceptor role is filled by E173. Positions 174, 196, and 378 each coordinate Zn(2+).

The protein belongs to the peptidase M20B family. It depends on Zn(2+) as a cofactor.

The protein localises to the cytoplasm. It carries out the reaction Release of the N-terminal residue from a tripeptide.. Its function is as follows. Cleaves the N-terminal amino acid of tripeptides. This Macrococcus caseolyticus (strain JCSC5402) (Macrococcoides caseolyticum) protein is Peptidase T.